Reading from the N-terminus, the 789-residue chain is Ent-kaurene synthase TSP4, chloroplastic (789 aa).

Asp-540 and Asp-544 together coordinate Mg(2+). The DDXXD motif motif lies at Asp-540–Asp-544. The helical transmembrane segment at Ala-638–Gly-656 threads the bilayer. Mg(2+)-binding residues include Asn-684, Arg-687, and Glu-692.

The protein belongs to the terpene synthase family. It depends on Mg(2+) as a cofactor. Expressed in leaves and fruits, including trichomes.

It localises to the plastid. The protein localises to the chloroplast membrane. The enzyme catalyses ent-copalyl diphosphate = ent-kaur-16-ene + diphosphate. It functions in the pathway plant hormone biosynthesis; gibberellin biosynthesis. In terms of biological role, involved in the biosynthesis of labdane-type diterpenoid including cleroda-dienols, and peregrinol lactones and furan derivatives, dopaminergic diterpenoids that can bind to dopamine receptors in the human pituitary gland, have probably ability to lower prolactin levels, and are used to treat menstrual cycle disorders (e.g. premenstrual syndrome and mastodynia). Terpene synthase that produces ent-kaurene from ent-copalyl diphosphate. This is Ent-kaurene synthase TSP4, chloroplastic from Vitex agnus-castus (Chaste tree).